The chain runs to 236 residues: Growth-regulating factor 12 (236 aa).

Residues 1-27 form a disordered region; it reads MLAEGRQVYLPPPPPSKLPRLSGTDPT. In terms of domain architecture, QLQ spans 74-109; the sequence is ALTFMQRQELEQQVLIYRYFAAGAPVPVHLVLPIWK. The WRC domain occupies 140–184; that stretch reads EPEPGRCRRTDGKKWRCSRDVVPGHKYCERHVHRGRGRSRKPMEA. Short sequence motifs (bipartite nuclear localization signal) lie at residues 145–155 and 173–180; these read RCRRTDGKKWR and RGRGRSRK.

The protein belongs to the GRF family.

Its subcellular location is the nucleus. Functionally, transcription activator that plays a regulatory role in gibberellin-induced stem elongation. The protein is Growth-regulating factor 12 (GRF12) of Oryza sativa subsp. japonica (Rice).